Consider the following 737-residue polypeptide: Protein OPG064 (737 aa).

Position 1 is an N-acetylmethionine; by host (Met-1). Cys-496 and Cys-535 are disulfide-bonded.

This sequence belongs to the orthopoxvirus OPG064 family. As to quaternary structure, interacts with host KLC2; this interaction promotes IEV trafficking by engaging the host kinesin-1 complex. Interacts with protein OPG056. In terms of processing, N-acetylated on initiator methionine by host.

Plays a role in intracellular enveloped virus (IEV) transport to the cell surface on microtubules. Together with protein OPG056, forms a complex that interacts with host KLC2 (kinesin light chain isoform 2) to engage the kinesin-1 complex and thereby promote IEV trafficking. In Homo sapiens (Human), this protein is Protein OPG064 (OPG064).